The following is a 443-amino-acid chain: UDP-N-acetylmuramate--L-alanine ligase (443 aa).

110–116 (GAHGKTS) is a binding site for ATP.

The protein belongs to the MurCDEF family.

Its subcellular location is the cytoplasm. The enzyme catalyses UDP-N-acetyl-alpha-D-muramate + L-alanine + ATP = UDP-N-acetyl-alpha-D-muramoyl-L-alanine + ADP + phosphate + H(+). It participates in cell wall biogenesis; peptidoglycan biosynthesis. Cell wall formation. This Lactococcus lactis subsp. lactis (strain IL1403) (Streptococcus lactis) protein is UDP-N-acetylmuramate--L-alanine ligase.